We begin with the raw amino-acid sequence, 202 residues long: Matrix protein (202 aa).

Residues Asp13–Trp32 are disordered. The PPXY motif motif lies at Pro35–Tyr38.

Belongs to the lyssavirus matrix protein family. In terms of assembly, homomultimer. Interacts with nucleoprotein and with the cytoplasmic domain of glycoprotein.

It localises to the virion membrane. Its subcellular location is the host endomembrane system. Its function is as follows. Plays a major role in assembly and budding of virion. Completely covers the ribonucleoprotein coil and keep it in condensed bullet-shaped form. Inhibits viral transcription and stimulates replication. Plays a major role in early induction of TRAIL-mediated apoptosis in infected neurons. The protein is Matrix protein (M) of Lagos bat virus (LBV).